We begin with the raw amino-acid sequence, 359 residues long: Photosystem II protein D1 1 (359 aa).

3 consecutive transmembrane segments (helical) span residues 29-46 (YVGW…AATI), 118-133 (HFLI…EWEL), and 142-156 (WICV…AASA). Residue His118 coordinates chlorophyll a. Residue Tyr126 coordinates pheophytin a. The [CaMn4O5] cluster site is built by Asp170 and Glu189. A helical transmembrane segment spans residues 197–218 (FHMLGVAGVFGGSLFSAMHGSL). Position 198 (His198) interacts with chlorophyll a. A quinone is bound by residues His215 and 264–265 (SF). Fe cation is bound at residue His215. Position 272 (His272) interacts with Fe cation. Residues 274–288 (FLAAWPVVGIWFTAL) traverse the membrane as a helical segment. [CaMn4O5] cluster is bound by residues His332, Glu333, Asp342, and Ala344. Positions 345–359 (AAESTPVALQAPAIG) are excised as a propeptide.

This sequence belongs to the reaction center PufL/M/PsbA/D family. PSII is composed of 1 copy each of membrane proteins PsbA, PsbB, PsbC, PsbD, PsbE, PsbF, PsbH, PsbI, PsbJ, PsbK, PsbL, PsbM, PsbT, PsbX, PsbY, PsbZ, Psb30/Ycf12, peripheral proteins PsbO, CyanoQ (PsbQ), PsbU, PsbV and a large number of cofactors. It forms dimeric complexes. Requires The D1/D2 heterodimer binds P680, chlorophylls that are the primary electron donor of PSII, and subsequent electron acceptors. It shares a non-heme iron and each subunit binds pheophytin, quinone, additional chlorophylls, carotenoids and lipids. D1 provides most of the ligands for the Mn4-Ca-O5 cluster of the oxygen-evolving complex (OEC). There is also a Cl(-1) ion associated with D1 and D2, which is required for oxygen evolution. The PSII complex binds additional chlorophylls, carotenoids and specific lipids. as cofactor. Post-translationally, tyr-161 forms a radical intermediate that is referred to as redox-active TyrZ, YZ or Y-Z. In terms of processing, C-terminally processed by CtpA; processing is essential to allow assembly of the oxygen-evolving complex and thus photosynthetic growth.

The protein resides in the cellular thylakoid membrane. The catalysed reaction is 2 a plastoquinone + 4 hnu + 2 H2O = 2 a plastoquinol + O2. Photosystem II (PSII) is a light-driven water:plastoquinone oxidoreductase that uses light energy to abstract electrons from H(2)O, generating O(2) and a proton gradient subsequently used for ATP formation. It consists of a core antenna complex that captures photons, and an electron transfer chain that converts photonic excitation into a charge separation. The D1/D2 (PsbA/PsbD) reaction center heterodimer binds P680, the primary electron donor of PSII as well as several subsequent electron acceptors. The protein is Photosystem II protein D1 1 of Parasynechococcus marenigrum (strain WH8102).